The sequence spans 229 residues: Orotate phosphoribosyltransferase (229 aa).

Residues arginine 107, lysine 108, lysine 111, histidine 113, and 133-141 each bind 5-phospho-alpha-D-ribose 1-diphosphate; that span reads EDLTTAGGS. Position 137 (threonine 137) interacts with orotate.

It belongs to the purine/pyrimidine phosphoribosyltransferase family. PyrE subfamily. Homodimer. It depends on Mg(2+) as a cofactor.

The catalysed reaction is orotidine 5'-phosphate + diphosphate = orotate + 5-phospho-alpha-D-ribose 1-diphosphate. Its pathway is pyrimidine metabolism; UMP biosynthesis via de novo pathway; UMP from orotate: step 1/2. Its function is as follows. Catalyzes the transfer of a ribosyl phosphate group from 5-phosphoribose 1-diphosphate to orotate, leading to the formation of orotidine monophosphate (OMP). The sequence is that of Orotate phosphoribosyltransferase from Rhizobium johnstonii (strain DSM 114642 / LMG 32736 / 3841) (Rhizobium leguminosarum bv. viciae).